Reading from the N-terminus, the 198-residue chain is Fucoxanthin-chlorophyll a-c binding protein B, chloroplastic (198 aa).

Residues 1–31 constitute a chloroplast transit peptide; it reads MKFTVFASLFASAAAFAPAQQAARTSVATNM. The next 3 helical transmembrane spans lie at 73 to 94, 114 to 134, and 174 to 196; these read ISMLAVAGYLAQEAGWRLGGDI, IPQAGLIQIIAFIGFLETSVM, and GRAAQMGILALMVHEQLGVNILP.

The protein belongs to the fucoxanthin chlorophyll protein family. As to quaternary structure, the LHC complex of chromophytic algae is composed of fucoxanthin, chlorophyll A and C bound non-covalently by fucoxanthin chlorophyll proteins (FCPs). The ratio of the pigments in LHC; fucoxanthin: chlorophyll C: chlorophyll A; (0.6-1): (0.1-0.3): (1).

It is found in the plastid. Its subcellular location is the chloroplast thylakoid membrane. In terms of biological role, the light-harvesting complex (LHC) functions as a light receptor, it captures and delivers excitation energy to photosystems with which it is closely associated. Energy is transferred from the carotenoid and chlorophyll C (or B) to chlorophyll A and the photosynthetic reaction centers where it is used to synthesize ATP and reducing power. The sequence is that of Fucoxanthin-chlorophyll a-c binding protein B, chloroplastic (FCPB) from Phaeodactylum tricornutum (Diatom).